The sequence spans 379 residues: Alcohol dehydrogenase 2 (379 aa).

Residue Cys-48 participates in Zn(2+) binding. 49 to 53 lines the NAD(+) pocket; that stretch reads HTDML. Positions 69, 100, 103, 106, 114, and 178 each coordinate Zn(2+). NAD(+) contacts are provided by residues 203–208, Asp-227, Lys-232, 275–277, 298–300, and 321–323; these read GLGAVG, TGI, IGA, and TTF.

This sequence belongs to the zinc-containing alcohol dehydrogenase family. Class-IV subfamily. Homodimer. The cofactor is Zn(2+). In terms of tissue distribution, expressed in flowers and disk florets.

It catalyses the reaction (R,R)-chrysanthemol + NAD(+) = (1R,3R)-chrysanthemal + NADH + H(+). It carries out the reaction nerol + NAD(+) = neral + NADH + H(+). The enzyme catalyses (S)-(-)-citronellol + NAD(+) = (S)-(-)-citronellal + NADH + H(+). The catalysed reaction is perillyl alcohol + NAD(+) = perillyl aldehyde + NADH + H(+). It catalyses the reaction (6E)-8-hydroxygeraniol + NAD(+) = (6E)-8-hydroxygeranial + NADH + H(+). It carries out the reaction (2E)-geraniol + NAD(+) = (2E)-geranial + NADH + H(+). The protein operates within isoprenoid biosynthesis. Functionally, component of the monoterpenoid pyrethrins biosynthesis; pyrethrins are widely used plant-derived pesticide. Mediates the conversion of trans-chrysanthemol into trans-chrysanthemal. The chain is Alcohol dehydrogenase 2 from Tanacetum cinerariifolium (Dalmatian daisy).